The sequence spans 104 residues: N(4)-acetylcytidine amidohydrolase (104 aa).

Residues 7 to 95 (MTFFERFETD…IQDIYPGISQ (89 aa)) enclose the ASCH domain. The active-site Proton acceptor is Lys22. The active-site Nucleophile is the Thr25. The active-site Proton donor is Glu75.

The protein belongs to the N(4)-acetylcytidine amidohydrolase family.

It catalyses the reaction N(4)-acetylcytidine + H2O = cytidine + acetate + H(+). It carries out the reaction N(4)-acetyl-2'-deoxycytidine + H2O = 2'-deoxycytidine + acetate + H(+). The enzyme catalyses N(4)-acetylcytosine + H2O = cytosine + acetate + H(+). Its function is as follows. Catalyzes the hydrolysis of N(4)-acetylcytidine (ac4C). The polypeptide is N(4)-acetylcytidine amidohydrolase (Vibrio atlanticus (strain LGP32) (Vibrio splendidus (strain Mel32))).